The chain runs to 457 residues: Mesentericin Y105 secretion protein MesE (457 aa).

A helical membrane pass occupies residues 22-42; that stretch reads TLIIVPIFLLVVFIVLFSLFA.

Belongs to the membrane fusion protein (MFP) (TC 8.A.1) family.

The protein resides in the membrane. Functionally, involved in the secretion of mesentericin Y105. The protein is Mesentericin Y105 secretion protein MesE (mesE) of Leuconostoc mesenteroides.